Here is a 103-residue protein sequence, read N- to C-terminus: uncharacterized protein (103 aa).

This is an uncharacterized protein from Methanocaldococcus jannaschii (strain ATCC 43067 / DSM 2661 / JAL-1 / JCM 10045 / NBRC 100440) (Methanococcus jannaschii).